The following is a 98-amino-acid chain: Large ribosomal subunit protein uL23 (98 aa).

The protein belongs to the universal ribosomal protein uL23 family. In terms of assembly, part of the 50S ribosomal subunit. Contacts protein L29, and trigger factor when it is bound to the ribosome.

Its function is as follows. One of the early assembly proteins it binds 23S rRNA. One of the proteins that surrounds the polypeptide exit tunnel on the outside of the ribosome. Forms the main docking site for trigger factor binding to the ribosome. This Ruegeria sp. (strain TM1040) (Silicibacter sp.) protein is Large ribosomal subunit protein uL23.